Here is a 123-residue protein sequence, read N- to C-terminus: Fluoride-specific ion channel FluC (123 aa).

4 helical membrane-spanning segments follow: residues Val7–Leu27, Leu39–Ile59, Phe68–Phe88, and Ala100–Leu120. 2 residues coordinate Na(+): Gly75 and Ser78.

The protein belongs to the fluoride channel Fluc/FEX (TC 1.A.43) family.

The protein resides in the cell membrane. The catalysed reaction is fluoride(in) = fluoride(out). Na(+) is not transported, but it plays an essential structural role and its presence is essential for fluoride channel function. Fluoride-specific ion channel. Important for reducing fluoride concentration in the cell, thus reducing its toxicity. This chain is Fluoride-specific ion channel FluC, found in Thermococcus onnurineus (strain NA1).